A 284-amino-acid chain; its full sequence is Neutral protease 2 homolog AFLA_119780 (284 aa).

Intrachain disulfides connect Cys113/Cys185 and Cys192/Cys210. His235 is a binding site for Zn(2+). Glu236 is an active-site residue. His239 and Asp250 together coordinate Zn(2+).

It belongs to the peptidase M35 family. The cofactor is Zn(2+).

It is found in the secreted. The catalysed reaction is Preferential cleavage of bonds with hydrophobic residues in P1'. Also 3-Asn-|-Gln-4 and 8-Gly-|-Ser-9 bonds in insulin B chain.. In terms of biological role, secreted metalloproteinase that allows assimilation of proteinaceous substrates. Shows high activities on basic nuclear substrates such as histone and protamine. The chain is Neutral protease 2 homolog AFLA_119780 from Aspergillus flavus (strain ATCC 200026 / FGSC A1120 / IAM 13836 / NRRL 3357 / JCM 12722 / SRRC 167).